The sequence spans 474 residues: Lipoprotein lipase (474 aa).

Residues 1–27 form the signal peptide; sequence MESKALLLVVLGVWLQSLTAFRGGVAA. The tract at residues 32–53 is interaction with GPIHBP1; the sequence is RDFSDIESKFALRTPEDTAEDT. Residues cysteine 54 and cysteine 67 are joined by a disulfide bond. N-linked (GlcNAc...) asparagine glycosylation occurs at asparagine 70. Tyrosine 121 bears the 3'-nitrotyrosine mark. Serine 159 (nucleophile) is an active-site residue. Residue aspartate 183 is the Charge relay system of the active site. Tyrosine 191 bears the 3'-nitrotyrosine mark. Ca(2+) is bound by residues alanine 194, arginine 197, serine 199, and aspartate 202. Residues cysteine 243 and cysteine 266 are joined by a disulfide bond. Residues 243–266 are essential for determining substrate specificity; it reads CNIGEAIRVIAERGLGDVDQLVKC. Histidine 268 functions as the Charge relay system in the catalytic mechanism. 2 disulfide bridges follow: cysteine 291-cysteine 310 and cysteine 302-cysteine 305. Positions 341–464 constitute a PLAT domain; the sequence is FHYQVKIHFS…KGKDSAVFVK (124 aa). Tyrosine 343 carries the post-translational modification 3'-nitrotyrosine. Residue asparagine 386 is glycosylated (N-linked (GlcNAc...) asparagine). The important for interaction with lipoprotein particles stretch occupies residues 417–421; that stretch reads WPDWW. Residues 430 to 434 form an important for heparin binding region; it reads RIRVK. The segment at 443–467 is interaction with GPIHBP1; the sequence is IFCAREKVSHLQKGKDSAVFVKCHD. Cysteine 445 and cysteine 465 form a disulfide bridge.

This sequence belongs to the AB hydrolase superfamily. Lipase family. As to quaternary structure, homodimer. Interacts with GPIHBP1 with 1:1 stoichiometry. Interacts with APOC2; the interaction activates LPL activity in the presence of lipids. Interaction with heparan sulfate proteoglycans is required to protect LPL against loss of activity. Associates with lipoprotein particles in blood plasma. Interacts with LMF1 and SEL1L; interaction with SEL1L is required to prevent aggregation of newly synthesized LPL in the endoplasmic reticulum (ER), and for normal export of LPL from the ER to the extracellular space. Interacts with SORL1; SORL1 acts as a sorting receptor, promoting LPL localization to endosomes and later to lysosomes, leading to degradation of newly synthesized LPL. Post-translationally, tyrosine nitration after lipopolysaccharide (LPS) challenge down-regulates the lipase activity. N-glycosylated. As to expression, detected in white and brown adipose tissue and heart muscle, especially at the lumenal surface of capillaries. Detected on capillary endothelium in the lactating mammary gland. Detected in blood plasma (at protein level). Expressed in liver, epididymal fat, heart, psoas muscle, lactating mammary gland, adrenal, lung, and ovary. Highest levels in heart and adrenal gland.

The protein resides in the cell membrane. It localises to the secreted. Its subcellular location is the extracellular space. It is found in the extracellular matrix. It catalyses the reaction a triacylglycerol + H2O = a diacylglycerol + a fatty acid + H(+). The catalysed reaction is a 1,2-diacyl-sn-glycero-3-phosphocholine + H2O = a 2-acyl-sn-glycero-3-phosphocholine + a fatty acid + H(+). It carries out the reaction 1,2,3-tri-(9Z-octadecenoyl)-glycerol + H2O = di-(9Z)-octadecenoylglycerol + (9Z)-octadecenoate + H(+). The enzyme catalyses 1,2-di-(9Z-octadecenoyl)-sn-glycero-3-phosphocholine + H2O = (9Z-octadecenoyl)-sn-glycero-3-phosphocholine + (9Z)-octadecenoate + H(+). It catalyses the reaction 1,2,3-tributanoylglycerol + H2O = dibutanoylglycerol + butanoate + H(+). The catalysed reaction is 1,2-dihexadecanoyl-sn-glycero-3-phosphocholine + H2O = hexadecanoyl-sn-glycero-3-phosphocholine + hexadecanoate + H(+). With respect to regulation, the apolipoprotein APOC2 acts as a coactivator of LPL activity. Ca(2+) binding promotes protein stability and formation of the active homodimer. Interaction with GPIHBP1 protects LPL against inactivation by ANGPTL4. Key enzyme in triglyceride metabolism. Catalyzes the hydrolysis of triglycerides from circulating chylomicrons and very low density lipoproteins (VLDL), and thereby plays an important role in lipid clearance from the blood stream, lipid utilization and storage. Although it has both phospholipase and triglyceride lipase activities it is primarily a triglyceride lipase with low but detectable phospholipase activity. Mediates margination of triglyceride-rich lipoprotein particles in capillaries. Recruited to its site of action on vascular endothelium by binding to GPIHBP1 and cell surface heparan sulfate proteoglycans. The sequence is that of Lipoprotein lipase (Lpl) from Mus musculus (Mouse).